A 313-amino-acid polypeptide reads, in one-letter code: Ribonuclease HIII (313 aa).

A disordered region spans residues 63-85; sequence ARWGTAEPQEKKKTAKKPADPRY. Residues 70–82 show a composition bias toward basic and acidic residues; the sequence is PQEKKKTAKKPAD. The region spanning 94–310 is the RNase H type-2 domain; that stretch reads MSVIGSDEVG…TQKAQRLADK (217 aa). Residues Asp-100, Glu-101, and Asp-205 each coordinate a divalent metal cation.

The protein belongs to the RNase HII family. RnhC subfamily. As to quaternary structure, interacts with the RNA polymerase core. It depends on Mn(2+) as a cofactor. Requires Mg(2+) as cofactor.

Its subcellular location is the cytoplasm. The enzyme catalyses Endonucleolytic cleavage to 5'-phosphomonoester.. Its function is as follows. Endonuclease that specifically degrades the RNA of RNA-DNA hybrids. The chain is Ribonuclease HIII (rnhC) from Bacillus subtilis (strain 168).